Here is a 136-residue protein sequence, read N- to C-terminus: Psoriasis susceptibility 1 candidate gene 2 protein homolog (136 aa).

The first 22 residues, 1 to 22 (MILNWKLLGILVLCLHTRGISG), serve as a signal peptide directing secretion. The segment at 20 to 136 (ISGSEDHPSH…DLDPPREEYR (117 aa)) is disordered. The segment covering 23 to 33 (SEDHPSHPPAE) has biased composition (basic and acidic residues). 2 stretches are compositionally biased toward pro residues: residues 44–74 (PQGP…PPWR) and 83–116 (PPEP…PPAP). Basic and acidic residues predominate over residues 117-136 (EVDHRPQEEPDLDPPREEYR).

The protein localises to the secreted. The polypeptide is Psoriasis susceptibility 1 candidate gene 2 protein homolog (PSORS1C2) (Pan troglodytes (Chimpanzee)).